The primary structure comprises 32 residues: Photosystem I reaction center subunit XII (32 aa).

Residues 4–26 form a helical membrane-spanning segment; the sequence is ISDSQIIVILLSVFITSILALRL.

This sequence belongs to the PsaM family.

The protein localises to the plastid. The protein resides in the chloroplast thylakoid membrane. The polypeptide is Photosystem I reaction center subunit XII (Marchantia polymorpha (Common liverwort)).